Consider the following 155-residue polypeptide: SsrA-binding protein (155 aa).

It belongs to the SmpB family.

The protein localises to the cytoplasm. In terms of biological role, required for rescue of stalled ribosomes mediated by trans-translation. Binds to transfer-messenger RNA (tmRNA), required for stable association of tmRNA with ribosomes. tmRNA and SmpB together mimic tRNA shape, replacing the anticodon stem-loop with SmpB. tmRNA is encoded by the ssrA gene; the 2 termini fold to resemble tRNA(Ala) and it encodes a 'tag peptide', a short internal open reading frame. During trans-translation Ala-aminoacylated tmRNA acts like a tRNA, entering the A-site of stalled ribosomes, displacing the stalled mRNA. The ribosome then switches to translate the ORF on the tmRNA; the nascent peptide is terminated with the 'tag peptide' encoded by the tmRNA and targeted for degradation. The ribosome is freed to recommence translation, which seems to be the essential function of trans-translation. The sequence is that of SsrA-binding protein from Helicobacter hepaticus (strain ATCC 51449 / 3B1).